Reading from the N-terminus, the 287-residue chain is MKKAQTWIITCFCLQLLLLNPLVKTQSSCGNPVTDDVNDIAKLVGNLPNDYLITLKYVPKMDSLPNHCWLHLMVPEFSRSLHNLLQKFVDISDMSDVLSNYSIINNLTRIINDLMACLAFDKNKDFIKENGHLYEEDRFIPENFFRLFNRTIEVYKEFADSLDKNDCIMPSTVETPENDSRVAVTKTISFPPVAASSLRNDSIGSNTSSNSNKEALGFISSSSLQGISIALTSLLSLLIGFILGVIYWKKTHPKSRPESNETTQCHGCQEENEISMLQQKEKEHLQV.

The first 25 residues, 1-25 (MKKAQTWIITCFCLQLLLLNPLVKT), serve as a signal peptide directing secretion. At 26 to 225 (QSSCGNPVTD…LGFISSSSLQ (200 aa)) the chain is on the extracellular side. Disulfide bonds link cysteine 29–cysteine 117 and cysteine 68–cysteine 167. N-linked (GlcNAc...) asparagine glycosylation is found at asparagine 100, asparagine 106, asparagine 149, asparagine 178, asparagine 200, and asparagine 206. The helical transmembrane segment at 226-246 (GISIALTSLLSLLIGFILGVI) threads the bilayer. Residues 247–287 (YWKKTHPKSRPESNETTQCHGCQEENEISMLQQKEKEHLQV) are Cytoplasmic-facing.

It belongs to the SCF family. As to quaternary structure, homodimer, non-covalently linked. Post-translationally, a soluble form is produced by proteolytic processing of isoform 1 in the extracellular domain.

It is found in the cell membrane. The protein localises to the secreted. It localises to the cytoplasm. The protein resides in the cytoskeleton. Its subcellular location is the cell projection. It is found in the lamellipodium. The protein localises to the filopodium. In terms of biological role, ligand for the receptor-type protein-tyrosine kinase KIT. Plays an essential role in the regulation of cell survival and proliferation, hematopoiesis, stem cell maintenance, gametogenesis, mast cell development, migration and function, and in melanogenesis. KITLG/SCF binding can activate several signaling pathways. Acts synergistically with other cytokines, probably interleukins. The sequence is that of Kit ligand (KITLG) from Coturnix japonica (Japanese quail).